The primary structure comprises 351 residues: SLAM family member 6 (351 aa).

The signal sequence occupies residues 1–30 (MAVSRAPAPDSACQRMVWLFPLVFCLGSGS). The Extracellular portion of the chain corresponds to 31 to 239 (EVSQSSSDPQ…KGVLTNPPWN (209 aa)). The Ig-like V-type domain occupies 36–130 (SSDPQLMNGV…YTAQITTKDS (95 aa)). Residues Asn82, Asn101, Asn112, Asn152, Asn159, Asn172, Asn186, Asn193, and Asn218 are each glycosylated (N-linked (GlcNAc...) asparagine). Positions 147-210 (NLETTNYTLL…RNSGDQTYVC (64 aa)) constitute an Ig-like C2-type domain. Disulfide bonds link Cys162-Cys229 and Cys168-Cys210. A helical transmembrane segment spans residues 240 to 262 (AVWFMTTISIISAVILIFVCWSI). The Cytoplasmic segment spans residues 263 to 351 (HVWKRRGSLP…KVNTLINYNS (89 aa)). The interval 272–295 (PLTSQHPESSQSTDGPGSPGNTVY) is disordered. Short sequence motifs (ITSM) lie at residues 293–298 (TVYAQV) and 317–322 (TIYSIV). Tyr319 bears the Phosphotyrosine mark.

In terms of assembly, homodimer. Interacts with PTN6 and, upon phosphorylation, with PTN11 and SH2D1A/SAP. Phosphorylated. Expressed on hematopoietic cells. Isoform 3 is expressed in thymocytes and B lymphocytes of C57Bl/6 strain.

The protein resides in the cell membrane. In terms of biological role, self-ligand receptor of the signaling lymphocytic activation molecule (SLAM) family. SLAM receptors triggered by homo- or heterotypic cell-cell interactions are modulating the activation and differentiation of a wide variety of immune cells and thus are involved in the regulation and interconnection of both innate and adaptive immune response. Activities are controlled by presence or absence of small cytoplasmic adapter proteins, SH2D1A/SAP and/or SH2D1B/EAT-2. Triggers cytolytic activity only in natural killer cells (NK) expressing high surface densities of natural cytotoxicity receptors. Positive signaling in NK cells implicates phosphorylation of VAV1. NK cell activation seems to depend on SH2D1B and not on SH2D1A. In conjunction with SLAMF1 controls the transition between positive selection and the subsequent expansion and differentiation of the thymocytic natural killer T (NKT) cell lineage. Promotes T cell differentiation into a helper T-cell Th17 phenotype leading to increased IL-17 secretion; the costimulatory activity requires SH2D1A. Promotes recruitment of RORC to the IL-17 promoter. In conjunction with SLAMF1 and CD84/SLAMF5 may be a negative regulator of the humoral immune response. In the absence of SH2D1A/SAP can transmit negative signals to CD4(+) T-cells and NKT cells. Negatively regulates germinal center formation by inhibiting T-cell:B-cell adhesion; the function probably implicates increased association with PTPN6/SHP-1 via ITSMs in absence of SH2D1A/SAP. However, reported to mediated T-cell adhesion, to participate in stable T-cell:B-cell interactions and to be involved in maintaining B-cell tolerance in germinal centers and in preventing autoimmunity. Involved in regulation of autoimmunity. Isoform 3 may be suppressor of pathogenic T-cell proliferation. The chain is SLAM family member 6 (Slamf6) from Mus musculus (Mouse).